The primary structure comprises 299 residues: CDP-abequose synthase (299 aa).

A substrate-binding site is contributed by threonine 117. Residue tyrosine 134 is the Proton acceptor of the active site.

The protein belongs to the NAD(P)-dependent epimerase/dehydratase family.

The enzyme catalyses CDP-alpha-D-abequose + NADP(+) = CDP-4-dehydro-3,6-dideoxy-alpha-D-glucose + NADPH + H(+). It participates in bacterial outer membrane biogenesis; LPS O-antigen biosynthesis. The polypeptide is CDP-abequose synthase (rfbJ) (Salmonella typhimurium (strain LT2 / SGSC1412 / ATCC 700720)).